We begin with the raw amino-acid sequence, 653 residues long: Brain-enriched guanylate kinase-associated protein (653 aa).

Tyr186 is modified (phosphotyrosine). Residues 241-271 (PGSLSSHLSEASAQDLGFPEGLEKPGSRPPY) form a disordered region. Polar residues predominate over residues 243–252 (SLSSHLSEAS). Phosphoserine occurs at positions 249, 278, 295, and 314. Residues 288–329 (RHQDRRPSVEGPGSDVGFLQAQNSTDSTAEEEEEEEEDTEAG) form a disordered region. A compositionally biased stretch (acidic residues) spans 315-327 (TAEEEEEEEEDTE). Phosphoserine occurs at positions 400 and 427. Arg435 carries the asymmetric dimethylarginine modification. A phosphoserine mark is found at Ser523, Ser533, Ser535, Ser558, Ser560, Ser564, Ser613, and Ser623. The segment at 587–653 (GASGSPEPEL…KAQLYGTLLN (67 aa)) is disordered.

In terms of assembly, interacts with DLG4 and DLGAP1 and forms a ternary complex.

The protein localises to the cytoplasm. Its subcellular location is the membrane. Its function is as follows. May sustain the structure of the postsynaptic density (PSD). The sequence is that of Brain-enriched guanylate kinase-associated protein (BEGAIN) from Ovis aries (Sheep).